Reading from the N-terminus, the 498-residue chain is Glutamate--tRNA ligase (498 aa).

A 'HIGH' region motif is present at residues 10 to 20; it reads PSPTGYFHIGG. Residues 252 to 256 carry the 'KMSKS' region motif; sequence KLSKR. Residue Lys255 participates in ATP binding.

This sequence belongs to the class-I aminoacyl-tRNA synthetase family. Glutamate--tRNA ligase type 1 subfamily. Monomer.

It localises to the cytoplasm. The catalysed reaction is tRNA(Glu) + L-glutamate + ATP = L-glutamyl-tRNA(Glu) + AMP + diphosphate. In terms of biological role, catalyzes the attachment of glutamate to tRNA(Glu) in a two-step reaction: glutamate is first activated by ATP to form Glu-AMP and then transferred to the acceptor end of tRNA(Glu). The sequence is that of Glutamate--tRNA ligase from Mycoplasmoides gallisepticum (strain R(low / passage 15 / clone 2)) (Mycoplasma gallisepticum).